The chain runs to 542 residues: Monocarboxylate transporter 3 (542 aa).

Residues 1 to 19 (MGRADPEEGQLPAPVKPPD) are Cytoplasmic-facing. A helical transmembrane segment spans residues 20–40 (GGWGWIVLFGCFVITGFSYAF). At 41–63 (PKAVSVYFKELMKDFHVGYSDTA) the chain is on the extracellular side. A helical membrane pass occupies residues 64 to 84 (WISSIMLAMLYGTGPVCSIMV). The Cytoplasmic portion of the chain corresponds to 85–93 (NQFGCRPVM). The helical transmembrane segment at 94 to 114 (LIGGLLASSGMILASFTTNII) threads the bilayer. Over 115–119 (ELYLT) the chain is Extracellular. The helical transmembrane segment at 120 to 140 (AGVLTGLGMALNFQPSLIMLG) threads the bilayer. Topologically, residues 141–152 (TYFDKRRPLANG) are cytoplasmic. The helical transmembrane segment at 153 to 173 (LAAAGSPVFLSSLSPLGQVLL) threads the bilayer. Topologically, residues 174–181 (EKFGWRGG) are extracellular. Residues 182-202 (FLIMGGLLLNCCTCGAVMRPL) traverse the membrane as a helical segment. The Cytoplasmic segment spans residues 203–265 (DAGMKRKTEK…LDFSIFSNRG (63 aa)). Residues 226–247 (GGKSEEGISTTDGTKKTKKAKK) are disordered. Residues 266–286 (FIIYTISKFILVLGLFVPPIL) form a helical membrane-spanning segment. Residues 287-301 (LVNYAKDTGVPDTEA) are Extracellular-facing. Residues 302-322 (AFLLSIIGFIDIFARPACGMV) traverse the membrane as a helical segment. Residues 323–330 (AGLKWVRP) are Cytoplasmic-facing. Residues 331-351 (HVAYLFSFAMLFNGLTDICSA) form a helical membrane-spanning segment. Residues 352 to 357 (RASNYT) are Extracellular-facing. A helical transmembrane segment spans residues 358–378 (GLVIFCVFFGISYGMVGALQF). Residues 379–392 (EVLMAIVGSQKFSS) lie on the Cytoplasmic side of the membrane. Residues 393–413 (AIGLVLLIEAFAVLIGPPSAG) traverse the membrane as a helical segment. The Extracellular segment spans residues 414–423 (RLVDALKNYE). The helical transmembrane segment at 424–444 (VIFYLAGSEVVLSALFLAMAT) threads the bilayer. At 445 to 542 (YCCLNRGKKT…ADQTVERDSF (98 aa)) the chain is on the cytoplasmic side. The interval 453–542 (KTPPPEKNPS…ADQTVERDSF (90 aa)) is disordered. Basolateral sorting signal stretches follow at residues 465–510 (GGSD…VEDE) and 511–532 (QSGE…AGCN). Residues 468 to 478 (DTEEAESDVQE) are compositionally biased toward acidic residues.

This sequence belongs to the major facilitator superfamily. Monocarboxylate porter (TC 2.A.1.13) family. Retinal pigment epithelium.

Its subcellular location is the basolateral cell membrane. The catalysed reaction is (S)-lactate(in) + H(+)(in) = (S)-lactate(out) + H(+)(out). Functionally, probable retinal pigment epithelium (RPE)-specific proton-coupled L-lactate transporter. May facilitate transport of lactate and H(+) out of the retina and could therefore play a role in pH and ion homeostasis of the outer retina. The polypeptide is Monocarboxylate transporter 3 (SLC16A8) (Gallus gallus (Chicken)).